A 130-amino-acid polypeptide reads, in one-letter code: MAQTTRKSTIRKEKNSFTSGVVHIQSTFNNTIVTITNLTGDTISWASAGSSGFKGARKSTPFAAQTAAEKAALEALSTGMKTVEILVKGQGSGRETAIRAIEGAGFDIISIQDITSVPHNGCRPPKRRRV.

Belongs to the universal ribosomal protein uS11 family. In terms of assembly, part of the 30S ribosomal subunit.

The protein resides in the plastid. It is found in the chloroplast. The protein is Small ribosomal subunit protein uS11c of Phaeodactylum tricornutum (strain CCAP 1055/1).